Reading from the N-terminus, the 310-residue chain is Aspartate carbamoyltransferase catalytic subunit 2 (310 aa).

Positions 55 and 56 each coordinate carbamoyl phosphate. L-aspartate is bound at residue Lys-85. Residues Arg-106, His-134, and Gln-137 each coordinate carbamoyl phosphate. Positions 167 and 228 each coordinate L-aspartate. 2 residues coordinate carbamoyl phosphate: Leu-266 and Pro-267.

It belongs to the aspartate/ornithine carbamoyltransferase superfamily. ATCase family. As to quaternary structure, heterododecamer (2C3:3R2) of six catalytic PyrB chains organized as two trimers (C3), and six regulatory PyrI chains organized as three dimers (R2).

The catalysed reaction is carbamoyl phosphate + L-aspartate = N-carbamoyl-L-aspartate + phosphate + H(+). Its pathway is pyrimidine metabolism; UMP biosynthesis via de novo pathway; (S)-dihydroorotate from bicarbonate: step 2/3. Functionally, catalyzes the condensation of carbamoyl phosphate and aspartate to form carbamoyl aspartate and inorganic phosphate, the committed step in the de novo pyrimidine nucleotide biosynthesis pathway. The chain is Aspartate carbamoyltransferase catalytic subunit 2 from Shewanella halifaxensis (strain HAW-EB4).